A 211-amino-acid chain; its full sequence is MAKIKLLSIDGNFAKELEVTSDLFVEVPHKQAMFDSVLAENAAERQGTHSTLTKGEVRGGGKKPWRQKHTGKARTGSTRNPHWTGGGVVFGPKPNRNYNLKVNAKVRLLAFKSALTIKLNEGKMLGLVANSDLETPSTKKMVNFINNANLENQKVLLVIVDNFSNIKKSTNNLQKVTTKLWYQVSVRDLMHANVVVVAEEAFTNYARKVSK.

The interval 44 to 90 (ERQGTHSTLTKGEVRGGGKKPWRQKHTGKARTGSTRNPHWTGGGVVF) is disordered. Over residues 60–72 (GGKKPWRQKHTGK) the composition is skewed to basic residues.

It belongs to the universal ribosomal protein uL4 family. In terms of assembly, part of the 50S ribosomal subunit.

One of the primary rRNA binding proteins, this protein initially binds near the 5'-end of the 23S rRNA. It is important during the early stages of 50S assembly. It makes multiple contacts with different domains of the 23S rRNA in the assembled 50S subunit and ribosome. In terms of biological role, forms part of the polypeptide exit tunnel. The polypeptide is Large ribosomal subunit protein uL4 (Ureaplasma parvum serovar 3 (strain ATCC 27815 / 27 / NCTC 11736)).